The following is a 134-amino-acid chain: Small ribosomal subunit protein uS8 (134 aa).

Belongs to the universal ribosomal protein uS8 family. Part of the 30S ribosomal subunit. Contacts proteins S5 and S12.

Functionally, one of the primary rRNA binding proteins, it binds directly to 16S rRNA central domain where it helps coordinate assembly of the platform of the 30S subunit. This Petrotoga mobilis (strain DSM 10674 / SJ95) protein is Small ribosomal subunit protein uS8.